The sequence spans 612 residues: UvrABC system protein C (612 aa).

The region spanning 20–98 (THSGVYRMLD…IKQHRPKYNI (79 aa)) is the GIY-YIG domain. Positions 208-243 (SSVLEEISAKMYQASEDMEYEKAQVYRDQLVILRKL) constitute a UVR domain.

This sequence belongs to the UvrC family. As to quaternary structure, interacts with UvrB in an incision complex.

It is found in the cytoplasm. In terms of biological role, the UvrABC repair system catalyzes the recognition and processing of DNA lesions. UvrC both incises the 5' and 3' sides of the lesion. The N-terminal half is responsible for the 3' incision and the C-terminal half is responsible for the 5' incision. The sequence is that of UvrABC system protein C from Francisella philomiragia subsp. philomiragia (strain ATCC 25017 / CCUG 19701 / FSC 153 / O#319-036).